We begin with the raw amino-acid sequence, 209 residues long: Protein GrpE (209 aa).

The protein belongs to the GrpE family. As to quaternary structure, homodimer.

The protein localises to the cytoplasm. Participates actively in the response to hyperosmotic and heat shock by preventing the aggregation of stress-denatured proteins, in association with DnaK and GrpE. It is the nucleotide exchange factor for DnaK and may function as a thermosensor. Unfolded proteins bind initially to DnaJ; upon interaction with the DnaJ-bound protein, DnaK hydrolyzes its bound ATP, resulting in the formation of a stable complex. GrpE releases ADP from DnaK; ATP binding to DnaK triggers the release of the substrate protein, thus completing the reaction cycle. Several rounds of ATP-dependent interactions between DnaJ, DnaK and GrpE are required for fully efficient folding. This Colwellia psychrerythraea (strain 34H / ATCC BAA-681) (Vibrio psychroerythus) protein is Protein GrpE.